The chain runs to 145 residues: Probable 4-amino-4-deoxy-L-arabinose-phosphoundecaprenol flippase subunit ArnF (145 aa).

The Cytoplasmic segment spans residues 1-3 (MAH). A helical transmembrane segment spans residues 4–24 (LTLSIRGLLLALMSVLLISVA). The Periplasmic segment spans residues 25–61 (QLSMKWGMGTLNQLWSDLVMLWQGEDYSSLFSQALAP). The helical transmembrane segment at 62 to 82 (VMAVGAGLFCYALSMACWVMA) threads the bilayer. Topologically, residues 83-89 (LKRLPLS) are cytoplasmic. The helical transmembrane segment at 90-110 (IAYPLLSLSYVLVYLGAVYLP) threads the bilayer. The Periplasmic segment spans residues 111-114 (WLNE). The chain crosses the membrane as a helical span at residues 115–135 (PLSWVKGTGIFLILLGLIFVL). Residues 136–145 (PKKNQTSDKS) lie on the Cytoplasmic side of the membrane.

Belongs to the ArnF family. Heterodimer of ArnE and ArnF.

The protein resides in the cell inner membrane. It participates in bacterial outer membrane biogenesis; lipopolysaccharide biosynthesis. Functionally, translocates 4-amino-4-deoxy-L-arabinose-phosphoundecaprenol (alpha-L-Ara4N-phosphoundecaprenol) from the cytoplasmic to the periplasmic side of the inner membrane. In Shewanella sediminis (strain HAW-EB3), this protein is Probable 4-amino-4-deoxy-L-arabinose-phosphoundecaprenol flippase subunit ArnF.